The following is a 152-amino-acid chain: UPF0178 protein YE1167 (152 aa).

It belongs to the UPF0178 family.

The polypeptide is UPF0178 protein YE1167 (Yersinia enterocolitica serotype O:8 / biotype 1B (strain NCTC 13174 / 8081)).